The primary structure comprises 122 residues: Large ribosomal subunit protein uL14 (122 aa).

It belongs to the universal ribosomal protein uL14 family. As to quaternary structure, part of the 50S ribosomal subunit. Forms a cluster with proteins L3 and L19. In the 70S ribosome, L14 and L19 interact and together make contacts with the 16S rRNA in bridges B5 and B8.

Functionally, binds to 23S rRNA. Forms part of two intersubunit bridges in the 70S ribosome. This is Large ribosomal subunit protein uL14 from Staphylococcus epidermidis (strain ATCC 35984 / DSM 28319 / BCRC 17069 / CCUG 31568 / BM 3577 / RP62A).